We begin with the raw amino-acid sequence, 134 residues long: Small ribosomal subunit protein bS16 (134 aa).

Residues 80–134 (GLAKRPTRSNPTKGEPGKKAQERLAMAKQAEEEAAAKAAEAAAAAAAPAEEAASE) form a disordered region. Low complexity predominate over residues 115 to 134 (AKAAEAAAAAAAPAEEAASE).

This sequence belongs to the bacterial ribosomal protein bS16 family.

In Brucella anthropi (strain ATCC 49188 / DSM 6882 / CCUG 24695 / JCM 21032 / LMG 3331 / NBRC 15819 / NCTC 12168 / Alc 37) (Ochrobactrum anthropi), this protein is Small ribosomal subunit protein bS16.